Reading from the N-terminus, the 145-residue chain is Transcription antitermination protein NusB (145 aa).

It belongs to the NusB family.

In terms of biological role, involved in transcription antitermination. Required for transcription of ribosomal RNA (rRNA) genes. Binds specifically to the boxA antiterminator sequence of the ribosomal RNA (rrn) operons. This Geotalea uraniireducens (strain Rf4) (Geobacter uraniireducens) protein is Transcription antitermination protein NusB.